A 110-amino-acid chain; its full sequence is Cytochrome c6 (110 aa).

Residues 1 to 25 (MKKKLSVLFTVFSFFVIGFAQIAFA) form the signal peptide. Heme c contacts are provided by Cys-39, Cys-42, His-43, and Met-83.

This sequence belongs to the cytochrome c family. PetJ subfamily. In terms of assembly, monomer. Post-translationally, binds 1 heme c group covalently per subunit.

The protein resides in the plastid. Its subcellular location is the chloroplast thylakoid lumen. Functionally, functions as an electron carrier between membrane-bound cytochrome b6-f and photosystem I in oxygenic photosynthesis. This Pyropia yezoensis (Susabi-nori) protein is Cytochrome c6 (petJ).